The sequence spans 282 residues: Stage 0 sporulation protein J (282 aa).

The H-T-H motif DNA-binding region spans 139 to 158 (EQLAKRLGKSRPHIANHLRL).

The protein belongs to the ParB family.

The protein localises to the cytoplasm. The protein resides in the nucleoid. Functionally, required for the initiation of sporulation and for normal chromosome segregation. Antagonizes sporulation inhibition by Soj. It probably interacts with a specific DNA site and other proteins involved in partitioning and cell division, and antagonizes Soj in response to cell cycle events related to chromosome partitioning. In Bacillus subtilis (strain 168), this protein is Stage 0 sporulation protein J.